A 155-amino-acid chain; its full sequence is Peptide deformylase (155 aa).

Residues C88 and H130 each coordinate Fe cation. E131 is a catalytic residue. H134 contacts Fe cation.

It belongs to the polypeptide deformylase family. Fe(2+) is required as a cofactor.

It carries out the reaction N-terminal N-formyl-L-methionyl-[peptide] + H2O = N-terminal L-methionyl-[peptide] + formate. Functionally, removes the formyl group from the N-terminal Met of newly synthesized proteins. Requires at least a dipeptide for an efficient rate of reaction. N-terminal L-methionine is a prerequisite for activity but the enzyme has broad specificity at other positions. In Pelotomaculum thermopropionicum (strain DSM 13744 / JCM 10971 / SI), this protein is Peptide deformylase.